We begin with the raw amino-acid sequence, 358 residues long: uncharacterized protein (358 aa).

207–214 (AAVKDGKT) is an ATP binding site.

This is an uncharacterized protein from Bacillus subtilis (strain 168).